We begin with the raw amino-acid sequence, 307 residues long: Fructose-bisphosphate aldolase (307 aa).

Residue serine 49 coordinates D-glyceraldehyde 3-phosphate. The active-site Proton donor is aspartate 82. Zn(2+)-binding residues include histidine 83, aspartate 104, glutamate 134, and histidine 180. Glycine 181 provides a ligand contact to dihydroxyacetone phosphate. Histidine 210 provides a ligand contact to Zn(2+). Dihydroxyacetone phosphate contacts are provided by residues 211-213 (GAS) and 253-256 (NTDT).

This sequence belongs to the class II fructose-bisphosphate aldolase family. Homodimer. It depends on Zn(2+) as a cofactor.

The catalysed reaction is beta-D-fructose 1,6-bisphosphate = D-glyceraldehyde 3-phosphate + dihydroxyacetone phosphate. It functions in the pathway carbohydrate degradation; glycolysis; D-glyceraldehyde 3-phosphate and glycerone phosphate from D-glucose: step 4/4. In terms of biological role, catalyzes the aldol condensation of dihydroxyacetone phosphate (DHAP or glycerone-phosphate) with glyceraldehyde 3-phosphate (G3P) to form fructose 1,6-bisphosphate (FBP) in gluconeogenesis and the reverse reaction in glycolysis. The chain is Fructose-bisphosphate aldolase (fba) from Helicobacter pylori (strain J99 / ATCC 700824) (Campylobacter pylori J99).